Here is a 501-residue protein sequence, read N- to C-terminus: Isoflavone 3'-hydroxylase (501 aa).

Residues 7–24 (LLSLSFIITIKILLKITS) traverse the membrane as a helical segment. C439 provides a ligand contact to heme.

It belongs to the cytochrome P450 family. Heme is required as a cofactor. In terms of tissue distribution, expressed constitutively in leaves and stems, but not in roots.

Its subcellular location is the endoplasmic reticulum membrane. The enzyme catalyses formononetin + reduced [NADPH--hemoprotein reductase] + O2 = calycosin + oxidized [NADPH--hemoprotein reductase] + H2O + H(+). In terms of biological role, involved in the biosynthesis of the pterocarpin phytoalexins. Acts on isoflavones with a 4'-methoxy group on the B-ring, such as biochanin A, formononetin and 2'-hydroxyformononetin. Has a low activity with daidzein and pseudobaptigenin, and no activity with the 7-O-methylated isoflavonoids isoformononetin and prunetin. The polypeptide is Isoflavone 3'-hydroxylase (Medicago truncatula (Barrel medic)).